A 200-amino-acid polypeptide reads, in one-letter code: dITP/XTP pyrophosphatase (200 aa).

7 to 12 (TSNKHK) provides a ligand contact to substrate. Mg(2+) contacts are provided by Glu38 and Asp73. Catalysis depends on Asp73, which acts as the Proton acceptor. Residues Ser74, 154 to 157 (FGYD), Lys177, and 182 to 183 (HR) contribute to the substrate site.

The protein belongs to the HAM1 NTPase family. As to quaternary structure, homodimer. Mg(2+) is required as a cofactor.

The catalysed reaction is XTP + H2O = XMP + diphosphate + H(+). It carries out the reaction dITP + H2O = dIMP + diphosphate + H(+). The enzyme catalyses ITP + H2O = IMP + diphosphate + H(+). In terms of biological role, pyrophosphatase that catalyzes the hydrolysis of nucleoside triphosphates to their monophosphate derivatives, with a high preference for the non-canonical purine nucleotides XTP (xanthosine triphosphate), dITP (deoxyinosine triphosphate) and ITP. Seems to function as a house-cleaning enzyme that removes non-canonical purine nucleotides from the nucleotide pool, thus preventing their incorporation into DNA/RNA and avoiding chromosomal lesions. The chain is dITP/XTP pyrophosphatase from Campylobacter jejuni subsp. doylei (strain ATCC BAA-1458 / RM4099 / 269.97).